The following is a 245-amino-acid chain: 2,3-bisphosphoglycerate-dependent phosphoglycerate mutase (245 aa).

Substrate is bound by residues 8-15 (RHGQSLWN), 21-22 (TG), arginine 60, 87-90 (ERHY), lysine 98, 114-115 (RR), and 183-184 (GN). Histidine 9 (tele-phosphohistidine intermediate) is an active-site residue. Glutamate 87 functions as the Proton donor/acceptor in the catalytic mechanism.

It belongs to the phosphoglycerate mutase family. BPG-dependent PGAM subfamily.

It carries out the reaction (2R)-2-phosphoglycerate = (2R)-3-phosphoglycerate. The protein operates within carbohydrate degradation; glycolysis; pyruvate from D-glyceraldehyde 3-phosphate: step 3/5. Functionally, catalyzes the interconversion of 2-phosphoglycerate and 3-phosphoglycerate. In Bacillus cereus (strain G9842), this protein is 2,3-bisphosphoglycerate-dependent phosphoglycerate mutase.